The sequence spans 345 residues: Anthranilate phosphoribosyltransferase (345 aa).

Residues Gly-84, 87-88 (GD), Thr-92, 94-97 (NIST), 112-120 (KHGGRSVSS), and Ser-124 contribute to the 5-phospho-alpha-D-ribose 1-diphosphate site. An anthranilate-binding site is contributed by Gly-84. Ser-96 contacts Mg(2+). Anthranilate is bound at residue Arg-170. Mg(2+) contacts are provided by Asp-229 and Glu-230.

This sequence belongs to the anthranilate phosphoribosyltransferase family. As to quaternary structure, homodimer. Mg(2+) serves as cofactor.

The enzyme catalyses N-(5-phospho-beta-D-ribosyl)anthranilate + diphosphate = 5-phospho-alpha-D-ribose 1-diphosphate + anthranilate. It participates in amino-acid biosynthesis; L-tryptophan biosynthesis; L-tryptophan from chorismate: step 2/5. Functionally, catalyzes the transfer of the phosphoribosyl group of 5-phosphorylribose-1-pyrophosphate (PRPP) to anthranilate to yield N-(5'-phosphoribosyl)-anthranilate (PRA). The sequence is that of Anthranilate phosphoribosyltransferase from Leptothrix cholodnii (strain ATCC 51168 / LMG 8142 / SP-6) (Leptothrix discophora (strain SP-6)).